Consider the following 140-residue polypeptide: Large ribosomal subunit protein uL13 (140 aa).

The protein belongs to the universal ribosomal protein uL13 family. Part of the 50S ribosomal subunit.

Its function is as follows. This protein is one of the early assembly proteins of the 50S ribosomal subunit, although it is not seen to bind rRNA by itself. It is important during the early stages of 50S assembly. The sequence is that of Large ribosomal subunit protein uL13 from Sulfurimonas denitrificans (strain ATCC 33889 / DSM 1251) (Thiomicrospira denitrificans (strain ATCC 33889 / DSM 1251)).